Reading from the N-terminus, the 184-residue chain is MPQSKSRKIAILGYRSVGKSSLTIQFVEGQFVDSYDPTIENTFTKLITVNGQEYHLQLVDTAGQDEYSIFPQTYSIDINGYILVYSVTSIKSFEVIKVIHGKLLDMVGKVQIPIMLVGNKKDLHMERVISYEEGKALAESWNAAFLESSAKENQTAVDVFRRIILEAEKIDGAASQGKSSCSVM.

Residue K8 forms a Glycyl lysine isopeptide (Lys-Gly) (interchain with G-Cter in ubiquitin) linkage. Positions 16 and 17 each coordinate GDP. S16 contributes to the GTP binding site. GTP is bound by residues G18, K19, S20, S21, V32, Y35, T38, N119, and D122. Residues K19, S20, and S21 each contribute to the GDP site. S20 contacts Mg(2+). An Effector region motif is present at residues 35 to 43 (YDPTIENTF). Position 38 (T38) interacts with GDP. T38 provides a ligand contact to Mg(2+). Residue D122 participates in GDP binding. Residue S130 is modified to Phosphoserine; by MAPKAPK5. A GDP-binding site is contributed by A150. A150 contacts GTP. Position 181 is a cysteine methyl ester (C181). C181 is lipidated: S-farnesyl cysteine. Positions 182–184 (SVM) are cleaved as a propeptide — removed in mature form.

This sequence belongs to the small GTPase superfamily. Rheb family. Associates with the mTORC1 complex (MTOR, MLST8 and RPTOR) in a guanyl nucleotide-independent manner. Interacts with TSC2. Interacts with MCRS1; the interaction maintains RHEB at the lysosome in its active GTP-bound form and prevents its interaction with the mTORC1 complex inhibitor TSC2, ensuring activation of the mTORC1 complex by RHEB. Interacts (when prenylated) with PDE6D; this promotes release from membranes. Farnesylation is important for efficiently activating mTORC1-mediated signaling. In terms of processing, polyubiquitinated in response to amino acid, promoting its interaction with MTOR and mTORC1 activation. Deubiquitination by ATXN3 promotes recruitment of the TSC-TBC complex and RHEB inactivation by TSC2. Monoubiquitinated at Lys-8 by RNF152, promoting its association with the TSC-TBC complex. Deubiquitinated at Lys-8 by USP4, promoting mTORC1 activation. Post-translationally, phosphorylation by MAPKAPK5 impairs GTP-binding and inactivation. As to expression, expressed at high levels in normal adult cortex as well as a number of peripheral tissues, including lung and intestine.

The protein localises to the endomembrane system. It is found in the lysosome membrane. It localises to the golgi apparatus membrane. Its subcellular location is the endoplasmic reticulum membrane. The protein resides in the cytoplasm. The protein localises to the cytosol. The enzyme catalyses GTP + H2O = GDP + phosphate + H(+). Its activity is regulated as follows. Alternates between an inactive form bound to GDP and an active form bound to GTP. Inactivated by the TSC-TBC complex via the GTPase activating protein (GAP) domain of TSC2. Autoinhibited by Tyr-35, which constrains the active site conformation, restricting the access of the catalytic Asp-65 to the nucleotide-binding pocket. Small GTPase that acts as an allosteric activator of the canonical mTORC1 complex, an evolutionarily conserved central nutrient sensor that stimulates anabolic reactions and macromolecule biosynthesis to promote cellular biomass generation and growth. In response to nutrients, growth factors or amino acids, specifically activates the protein kinase activity of MTOR, the catalytic component of the mTORC1 complex: acts by causing a conformational change that allows the alignment of residues in the active site of MTOR, thereby enhancing the phosphorylation of ribosomal protein S6 kinase (RPS6KB1 and RPS6KB2) and EIF4EBP1 (4E-BP1). RHEB is also required for localization of the TSC-TBC complex to lysosomal membranes. In response to starvation, RHEB is inactivated by the TSC-TBC complex, preventing activation of mTORC1. Has low intrinsic GTPase activity. The polypeptide is GTP-binding protein Rheb (Rattus norvegicus (Rat)).